Here is a 278-residue protein sequence, read N- to C-terminus: Transmembrane protein 41B (278 aa).

The interval 1-31 is disordered; it reads MQVHERSHTGGHTFQCNHGNEKKAPAAGKVH. The next 6 helical transmembrane spans lie at 39-59, 96-116, 142-162, 184-204, 212-232, and 249-269; these read MSLL…FLVY, FYVE…TFAI, CSGL…RPVV, LINY…FINI, PLKV…FVAI, and SWNS…PAIF. Positions 127 to 238 are VTT domain; required for its function in autophagy; it reads GFLYPFPLAL…FVAIKAGTTL (112 aa).

This sequence belongs to the TMEM41 family.

The protein localises to the endoplasmic reticulum membrane. Its subcellular location is the endomembrane system. The catalysed reaction is a 1,2-diacyl-sn-glycero-3-phospho-L-serine(in) = a 1,2-diacyl-sn-glycero-3-phospho-L-serine(out). The enzyme catalyses cholesterol(in) = cholesterol(out). It catalyses the reaction a 1,2-diacyl-sn-glycero-3-phosphocholine(in) = a 1,2-diacyl-sn-glycero-3-phosphocholine(out). It carries out the reaction a 1,2-diacyl-sn-glycero-3-phosphoethanolamine(in) = a 1,2-diacyl-sn-glycero-3-phosphoethanolamine(out). Phospholipid scramblase involved in lipid homeostasis and membrane dynamics processes. Has phospholipid scramblase activity toward cholesterol and phosphatidylserine, as well as phosphatidylethanolamine and phosphatidylcholine. Required for autophagosome formation: participates in early stages of autophagosome biogenesis at the endoplasmic reticulum (ER) membrane by reequilibrating the leaflets of the ER as lipids are extracted by atg2 (atg2a or atg2b) to mediate autophagosome assembly. In addition to autophagy, involved in other processes in which phospholipid scramblase activity is required. Required for normal motor neuron development. The polypeptide is Transmembrane protein 41B (Xenopus laevis (African clawed frog)).